The following is a 510-amino-acid chain: Putative folylpolyglutamate synthase (510 aa).

ATP is bound at residue 98 to 101 (GKGS). Mg(2+) is bound by residues S122, E189, and H217. Residues R342 and D357 each contribute to the ATP site.

It belongs to the folylpolyglutamate synthase family. It depends on a monovalent cation as a cofactor.

It localises to the mitochondrion inner membrane. The protein localises to the mitochondrion matrix. It is found in the cytoplasm. The catalysed reaction is (6S)-5,6,7,8-tetrahydrofolyl-(gamma-L-Glu)(n) + L-glutamate + ATP = (6S)-5,6,7,8-tetrahydrofolyl-(gamma-L-Glu)(n+1) + ADP + phosphate + H(+). Its pathway is cofactor biosynthesis; tetrahydrofolylpolyglutamate biosynthesis. In terms of biological role, catalyzes conversion of folates to polyglutamate derivatives allowing concentration of folate compounds in the cell and the intracellular retention of these cofactors, which are important substrates for most of the folate-dependent enzymes that are involved in one-carbon transfer reactions involved in purine, pyrimidine and amino acid synthesis. This Caenorhabditis elegans protein is Putative folylpolyglutamate synthase.